Reading from the N-terminus, the 428-residue chain is C4-dicarboxylate transport protein (428 aa).

Helical transmembrane passes span 8–28 (SLYV…HFYP), 44–64 (LIKM…IAGM), 76–96 (VALL…LIIV), 142–162 (IGAF…LFGF), 184–204 (VIFG…FGAM), 222–242 (LIIC…GSIA), 289–309 (VVGL…SIYL), 326–346 (IFHQ…AAGV), and 352–372 (IVLA…LALI).

Belongs to the dicarboxylate/amino acid:cation symporter (DAACS) (TC 2.A.23) family.

It is found in the cell inner membrane. Responsible for the transport of dicarboxylates such as succinate, fumarate, and malate from the periplasm across the membrane. The sequence is that of C4-dicarboxylate transport protein from Klebsiella pneumoniae subsp. pneumoniae (strain ATCC 700721 / MGH 78578).